Consider the following 434-residue polypeptide: 5'-deoxyadenosine deaminase (434 aa).

The Zn(2+) site is built by histidine 63 and histidine 65. The substrate site is built by glutamate 92 and histidine 184. Histidine 211 serves as a coordination point for Zn(2+). Residues glutamate 214 and aspartate 299 each contribute to the substrate site. A Zn(2+)-binding site is contributed by aspartate 299.

Belongs to the metallo-dependent hydrolases superfamily. MTA/SAH deaminase family. Homotetramer. Zn(2+) is required as a cofactor.

It catalyses the reaction 5'-deoxyadenosine + H2O + H(+) = 5'-deoxyinosine + NH4(+). It carries out the reaction S-adenosyl-L-homocysteine + H2O + H(+) = S-inosyl-L-homocysteine + NH4(+). The catalysed reaction is S-methyl-5'-thioadenosine + H2O + H(+) = S-methyl-5'-thioinosine + NH4(+). The enzyme catalyses adenosine + H2O + H(+) = inosine + NH4(+). Its pathway is amino-acid biosynthesis; S-adenosyl-L-methionine biosynthesis. In terms of biological role, catalyzes the deamination of three SAM-derived enzymatic products, namely 5'-deoxyadenosine, S-adenosyl-L-homocysteine, and 5'-methylthioadenosine, to produce the inosine analogs. Can also deaminate adenosine. The preferred substrate for this enzyme is 5'-deoxyadenosine, but all these substrates are efficiently deaminated. Likely functions in a S-adenosyl-L-methionine (SAM) recycling pathway from S-adenosyl-L-homocysteine (SAH) produced from SAM-dependent methylation reactions. May also be involved in the recycling of 5'-deoxyadenosine, whereupon the 5'-deoxyribose moiety of 5'-deoxyinosine is further metabolized to deoxyhexoses used for the biosynthesis of aromatic amino acids in methanogens. This chain is 5'-deoxyadenosine deaminase, found in Methanococcoides burtonii (strain DSM 6242 / NBRC 107633 / OCM 468 / ACE-M).